A 184-amino-acid chain; its full sequence is Thymidine kinase (184 aa).

Residues 10–17 (GPMYSGKT), His-53, and 83–86 (DEVQ) each bind ATP. Catalysis depends on Glu-84, which acts as the Proton acceptor. His-115 contacts substrate. Cys-140 and Cys-143 together coordinate Zn(2+). Residues 161 to 164 (IDVG) and Tyr-169 contribute to the substrate site. The Zn(2+) site is built by Cys-173 and Cys-176.

This sequence belongs to the thymidine kinase family. Homotetramer.

The protein localises to the cytoplasm. The enzyme catalyses thymidine + ATP = dTMP + ADP + H(+). The chain is Thymidine kinase (tdk) from Thermotoga maritima (strain ATCC 43589 / DSM 3109 / JCM 10099 / NBRC 100826 / MSB8).